We begin with the raw amino-acid sequence, 204 residues long: Guanylate kinase (204 aa).

A Guanylate kinase-like domain is found at 5–184 (GLLLVLSGPS…AVDHIKAIVD (180 aa)). 12–19 (GPSGVGKG) provides a ligand contact to ATP.

The protein belongs to the guanylate kinase family.

It is found in the cytoplasm. The catalysed reaction is GMP + ATP = GDP + ADP. Its function is as follows. Essential for recycling GMP and indirectly, cGMP. This Lactobacillus acidophilus (strain ATCC 700396 / NCK56 / N2 / NCFM) protein is Guanylate kinase.